The sequence spans 250 residues: Transmembrane protein 106C (250 aa).

Residues 1 to 25 are disordered; sequence MGSQHSAAARPSSCRRKQEDDRDGL. Glycine 2 is lipidated: N-myristoyl glycine. Residues 16–25 are compositionally biased toward basic and acidic residues; sequence RKQEDDRDGL. Residues 87-107 form a helical membrane-spanning segment; the sequence is YVLLSILLCLLASGLVVFFLF. Residues asparagine 173 and asparagine 186 are each glycosylated (N-linked (GlcNAc...) asparagine). Residues 197–217 form a helical membrane-spanning segment; it reads FSYVYFFCTVPEILVHNIVIF.

Belongs to the TMEM106 family. In terms of assembly, interacts with TMEM106B.

It localises to the endoplasmic reticulum membrane. Its subcellular location is the membrane. This chain is Transmembrane protein 106C (TMEM106C), found in Homo sapiens (Human).